The primary structure comprises 467 residues: ATP synthase subunit beta (467 aa).

156–163 (GGAGVGKT) provides a ligand contact to ATP.

This sequence belongs to the ATPase alpha/beta chains family. As to quaternary structure, F-type ATPases have 2 components, CF(1) - the catalytic core - and CF(0) - the membrane proton channel. CF(1) has five subunits: alpha(3), beta(3), gamma(1), delta(1), epsilon(1). CF(0) has three main subunits: a(1), b(2) and c(9-12). The alpha and beta chains form an alternating ring which encloses part of the gamma chain. CF(1) is attached to CF(0) by a central stalk formed by the gamma and epsilon chains, while a peripheral stalk is formed by the delta and b chains.

The protein resides in the cell membrane. It carries out the reaction ATP + H2O + 4 H(+)(in) = ADP + phosphate + 5 H(+)(out). In terms of biological role, produces ATP from ADP in the presence of a proton gradient across the membrane. The catalytic sites are hosted primarily by the beta subunits. In Cytobacillus firmus (Bacillus firmus), this protein is ATP synthase subunit beta.